A 335-amino-acid polypeptide reads, in one-letter code: tRNA N6-adenosine threonylcarbamoyltransferase (335 aa).

Residues His109, His113, and Tyr130 each coordinate a divalent metal cation. Residues 130–134, Asp162, Gly177, Glu181, and Asn266 each bind substrate; that span reads YVSGG. Asp294 serves as a coordination point for a divalent metal cation.

The protein belongs to the KAE1 / TsaD family. In terms of assembly, component of the EKC/KEOPS complex composed of at least tp53rk, tprkb, osgep and lage3; the whole complex dimerizes. A divalent metal cation serves as cofactor.

The protein resides in the cytoplasm. It localises to the nucleus. It catalyses the reaction L-threonylcarbamoyladenylate + adenosine(37) in tRNA = N(6)-L-threonylcarbamoyladenosine(37) in tRNA + AMP + H(+). Component of the EKC/KEOPS complex that is required for the formation of a threonylcarbamoyl group on adenosine at position 37 (t(6)A37) in tRNAs that read codons beginning with adenine. The complex is probably involved in the transfer of the threonylcarbamoyl moiety of threonylcarbamoyl-AMP (TC-AMP) to the N6 group of A37. OSGEP likely plays a direct catalytic role in this reaction, but requires other protein(s) of the complex to fulfill this activity. This chain is tRNA N6-adenosine threonylcarbamoyltransferase, found in Danio rerio (Zebrafish).